The following is a 543-amino-acid chain: Putative cysteine ligase BshC (543 aa).

Residues 419–440 (DEKNNDNIDEVVEEVKAQISDI) adopt a coiled-coil conformation.

The protein belongs to the BshC family.

Involved in bacillithiol (BSH) biosynthesis. May catalyze the last step of the pathway, the addition of cysteine to glucosamine malate (GlcN-Mal) to generate BSH. The protein is Putative cysteine ligase BshC of Oceanobacillus iheyensis (strain DSM 14371 / CIP 107618 / JCM 11309 / KCTC 3954 / HTE831).